Here is a 250-residue protein sequence, read N- to C-terminus: Ferritin-2, chloroplastic (250 aa).

The transit peptide at 1–43 (MLLRTAAASSLSLFNPNAEPSRSVPVLANNASRLVVRAAKGST) directs the protein to the chloroplast. The segment at 44 to 76 (NHRALTGVIFEPFEEVKKELDLVPTVPQASLAR) is extension peptide (EP). The 154-residue stretch at 77 to 230 (QKYVDESEAA…EYVAQLRRVG (154 aa)) folds into the Ferritin-like diiron domain. Fe cation-binding residues include Glu-94, Glu-129, His-132, Glu-178, and Gln-212.

It belongs to the ferritin family. As to quaternary structure, oligomer of 24 subunits. There are two types of subunits: L (light) chain and H (heavy) chain. The major chain can be light or heavy, depending on the species and tissue type. The functional molecule forms a roughly spherical shell with a diameter of 12 nm and contains a central cavity into which the insoluble mineral iron core is deposited.

Its subcellular location is the plastid. It localises to the chloroplast. It carries out the reaction 4 Fe(2+) + O2 + 4 H(+) = 4 Fe(3+) + 2 H2O. Its function is as follows. Stores iron in a soluble, non-toxic, readily available form. Important for iron homeostasis. Has ferroxidase activity. Iron is taken up in the ferrous form and deposited as ferric hydroxides after oxidation. The protein is Ferritin-2, chloroplastic (PFE2) of Vigna unguiculata (Cowpea).